The sequence spans 87 residues: Acyl carrier protein 3 (87 aa).

A Carrier domain is found at 1 to 79; sequence MSNPTVLDQI…DLVTYIEAAL (79 aa). Ser-39 bears the O-(pantetheine 4'-phosphoryl)serine mark.

Belongs to the acyl carrier protein (ACP) family. 4'-phosphopantetheine is transferred from CoA to a specific serine of apo-ACP by AcpS. This modification is essential for activity because fatty acids are bound in thioester linkage to the sulfhydryl of the prosthetic group.

The protein resides in the cytoplasm. Its pathway is lipid metabolism; fatty acid biosynthesis. Carrier of the growing fatty acid chain in fatty acid biosynthesis. The polypeptide is Acyl carrier protein 3 (Ralstonia nicotianae (strain ATCC BAA-1114 / GMI1000) (Ralstonia solanacearum)).